A 1044-amino-acid chain; its full sequence is Spindle assembly checkpoint serine/threonine-protein kinase bub1 (1044 aa).

Positions 36 to 204 constitute a BUB1 N-terminal domain; the sequence is FQEELDIIEE…SSPFPPPRIV (169 aa). Disordered regions lie at residues 209 to 259, 317 to 343, 404 to 446, 484 to 555, and 685 to 705; these read PVSS…PLLY, VHHD…TPTR, ESLE…SQEE, KNSN…DSNS, and IKPK…SLDG. A compositionally biased stretch (polar residues) spans 223–239; that stretch reads QVFSDASSSRDSQNASD. Polar residues predominate over residues 430–442; sequence NSSNSGATSLTGR. Positions 504 to 518 are enriched in low complexity; that stretch reads STLQEETATGTTSTT. Residues 544–555 show a composition bias toward polar residues; sequence RSPQYSTVDSNS. At threonine 550 the chain carries Phosphothreonine. Residues 718-1044 form the Protein kinase domain; the sequence is LSVISKLGQG…LLKSIEKRKI (327 aa). Positions 728, 729, 730, 762, and 809 each coordinate ATP. Aspartate 861 serves as the catalytic Proton acceptor. Positions 865, 866, and 900 each coordinate ATP.

This sequence belongs to the protein kinase superfamily. Ser/Thr protein kinase family. BUB1 subfamily. In terms of assembly, part of the BUB1-BUB3 complex, composed of bub1 and bub3. Interacts with spc7 (when phosphorylated on MELT motifs); to recruit the bub1-bub3 complex to kinetochores. Interacts with mad3. Autophosphorylated.

The protein resides in the nucleus. The protein localises to the chromosome. It is found in the centromere. It localises to the kinetochore. It carries out the reaction L-seryl-[protein] + ATP = O-phospho-L-seryl-[protein] + ADP + H(+). The catalysed reaction is L-threonyl-[protein] + ATP = O-phospho-L-threonyl-[protein] + ADP + H(+). Functionally, involved in mitotic spindle assembly checkpoint signaling, a process that delays anaphase until chromosomes are bioriented on the spindle, and in the repair of incorrect mitotic kinetochore-spindle microtubule attachments. Acts as a kinetochore scaffold for the recruitment of other spindle assembly checkpoint components. In Schizosaccharomyces pombe (strain 972 / ATCC 24843) (Fission yeast), this protein is Spindle assembly checkpoint serine/threonine-protein kinase bub1.